Reading from the N-terminus, the 307-residue chain is N-acetylmuramic acid 6-phosphate etherase (307 aa).

The SIS domain occupies 62 to 225 (VVDAFRVGGR…TTASMIRIGK (164 aa)). The active-site Proton donor is the E90. E121 is an active-site residue.

Belongs to the GCKR-like family. MurNAc-6-P etherase subfamily. In terms of assembly, homodimer.

It catalyses the reaction N-acetyl-D-muramate 6-phosphate + H2O = N-acetyl-D-glucosamine 6-phosphate + (R)-lactate. The protein operates within amino-sugar metabolism; 1,6-anhydro-N-acetylmuramate degradation. It functions in the pathway amino-sugar metabolism; N-acetylmuramate degradation. It participates in cell wall biogenesis; peptidoglycan recycling. Its function is as follows. Specifically catalyzes the cleavage of the D-lactyl ether substituent of MurNAc 6-phosphate, producing GlcNAc 6-phosphate and D-lactate. Together with AnmK, is also required for the utilization of anhydro-N-acetylmuramic acid (anhMurNAc) either imported from the medium or derived from its own cell wall murein, and thus plays a role in cell wall recycling. The polypeptide is N-acetylmuramic acid 6-phosphate etherase (Brucella anthropi (strain ATCC 49188 / DSM 6882 / CCUG 24695 / JCM 21032 / LMG 3331 / NBRC 15819 / NCTC 12168 / Alc 37) (Ochrobactrum anthropi)).